Here is a 185-residue protein sequence, read N- to C-terminus: uncharacterized protein (185 aa).

2 helical membrane passes run 1-21 (MMKFLLILIFLASFSFSLTPE) and 111-131 (FLWIITGIFTTLTASVIAFAW).

The protein to A.aeolicus aq_1900.

The protein resides in the cell membrane. This is an uncharacterized protein from Aquifex aeolicus (strain VF5).